Consider the following 238-residue polypeptide: Aspartate/glutamate leucyltransferase (238 aa).

It belongs to the R-transferase family. Bpt subfamily.

The protein localises to the cytoplasm. The catalysed reaction is N-terminal L-glutamyl-[protein] + L-leucyl-tRNA(Leu) = N-terminal L-leucyl-L-glutamyl-[protein] + tRNA(Leu) + H(+). It catalyses the reaction N-terminal L-aspartyl-[protein] + L-leucyl-tRNA(Leu) = N-terminal L-leucyl-L-aspartyl-[protein] + tRNA(Leu) + H(+). Functionally, functions in the N-end rule pathway of protein degradation where it conjugates Leu from its aminoacyl-tRNA to the N-termini of proteins containing an N-terminal aspartate or glutamate. The sequence is that of Aspartate/glutamate leucyltransferase from Shewanella sp. (strain MR-7).